We begin with the raw amino-acid sequence, 509 residues long: Cytochrome P450 monooxygenase ORF9 (509 aa).

A run of 2 helical transmembrane segments spans residues 20–40 (IYVL…GLIV) and 309–329 (LIIA…YYLL). The N-linked (GlcNAc...) asparagine glycan is linked to Asn353. Cys448 is a heme binding site.

This sequence belongs to the cytochrome P450 family. Heme serves as cofactor.

It localises to the membrane. The protein operates within sesquiterpene biosynthesis. In terms of biological role, cytochrome P450 monooxygenase; part of the gene cluster that mediates the biosynthesis of PR-toxin, a bicyclic sesquiterpene belonging to the eremophilane class and acting as a mycotoxin. The first step of the pathway is catalyzed by the aristolochene synthase which performs the cyclization of trans,trans-farnesyl diphosphate (FPP) to the bicyclic sesquiterpene aristolochene. Following the formation of aristolochene, the non-oxygenated aristolochene is converted to the trioxygenated intermediate eremofortin B, via 7-epi-neopetasone. This conversion appears to involve three enzymes, a hydroxysterol oxidase-like enzyme, the quinone-oxidase prx3 that forms the quinone-type-structure in the bicyclic nucleus of aristolochene with the C8-oxo group and the C-3 hydroxyl group, and the P450 monooxygenase ORF6 that introduces the epoxide at the double bond between carbons 1 and 2. No monoxy or dioxy-intermediates have been reported to be released to the broth, so these three early oxidative reactions may be coupled together. Eremofortin B is further oxidized by another P450 monooxygenase, that introduces a second epoxide between carbons 7 and 11 prior to acetylation to eremofortin A by the acetyltransferase ORF8. The second epoxidation may be performed by a second P450 monooxygenase. After the acetylation step, eremofortin A is converted to eremofortin C and then to PR-toxin. First the conversion of eremofortin A to eremofortin C proceeds by oxidation of the side chain of the molecule at C-12 and is catalyzed by the short-chain oxidoreductase prx1. The cytochrome P450 monooxygenase ORF6 is probably also involved in this step. The primary alcohol formed at C-12 is finally oxidized by the short-chain alcohol dehydrogenase prx4 that forms PR-toxin. The protein is Cytochrome P450 monooxygenase ORF9 of Penicillium roqueforti (strain FM164).